A 95-amino-acid polypeptide reads, in one-letter code: Putative pterin-4-alpha-carbinolamine dehydratase (95 aa).

This sequence belongs to the pterin-4-alpha-carbinolamine dehydratase family.

It catalyses the reaction (4aS,6R)-4a-hydroxy-L-erythro-5,6,7,8-tetrahydrobiopterin = (6R)-L-erythro-6,7-dihydrobiopterin + H2O. This chain is Putative pterin-4-alpha-carbinolamine dehydratase, found in Solibacter usitatus (strain Ellin6076).